Reading from the N-terminus, the 189-residue chain is Pyridoxal 5'-phosphate synthase subunit PdxT (189 aa).

47–49 provides a ligand contact to L-glutamine; that stretch reads GES. C79 acts as the Nucleophile in catalysis. L-glutamine-binding positions include R105 and 132 to 133; that span reads IR. Catalysis depends on charge relay system residues H168 and E170.

This sequence belongs to the glutaminase PdxT/SNO family. As to quaternary structure, in the presence of PdxS, forms a dodecamer of heterodimers. Only shows activity in the heterodimer.

It catalyses the reaction aldehydo-D-ribose 5-phosphate + D-glyceraldehyde 3-phosphate + L-glutamine = pyridoxal 5'-phosphate + L-glutamate + phosphate + 3 H2O + H(+). The enzyme catalyses L-glutamine + H2O = L-glutamate + NH4(+). The protein operates within cofactor biosynthesis; pyridoxal 5'-phosphate biosynthesis. Functionally, catalyzes the hydrolysis of glutamine to glutamate and ammonia as part of the biosynthesis of pyridoxal 5'-phosphate. The resulting ammonia molecule is channeled to the active site of PdxS. This is Pyridoxal 5'-phosphate synthase subunit PdxT from Methanocorpusculum labreanum (strain ATCC 43576 / DSM 4855 / Z).